A 333-amino-acid polypeptide reads, in one-letter code: MSNLITIERHILEQQKFFPDAQGELTDLLNDVAFAAKLVRREVVRAGLVDILGFTGSTNVQGEEVKKLDLFANEKIISAIGQHGRFAIMGSEENEGVIIPPKNESGNYALLFDPLDGSSNIDVNVSVGTIFSIYKLKGDDPGKASLSDCLQHGYEQVAAGYVIYGSSVVMVYTTGHGVHGFTYDPTIGEFLLSHENIITPKSGKYYSINEGSYAQFNEGTKRYLDYIKEEDPATNRPYSTRYIGSLVADFHRNLLTGGVFVYPPTTKHLKGKLRLMYEANPLAFICEQAGGRATNGRDRILDIQPLELHQRTPLYIGSVDDVILAEEFEQGIR.

Mg(2+) is bound by residues Glu-92, Asp-113, Leu-115, and Asp-116. Residues 116-119 (DGSS), Asn-209, Tyr-242, and Lys-272 each bind substrate. Residue Glu-278 coordinates Mg(2+).

It belongs to the FBPase class 1 family. Homotetramer. It depends on Mg(2+) as a cofactor.

The protein localises to the cytoplasm. The enzyme catalyses beta-D-fructose 1,6-bisphosphate + H2O = beta-D-fructose 6-phosphate + phosphate. The protein operates within carbohydrate biosynthesis; Calvin cycle. This is Fructose-1,6-bisphosphatase class 1 from Pelodictyon phaeoclathratiforme (strain DSM 5477 / BU-1).